Here is a 383-residue protein sequence, read N- to C-terminus: Probable disease resistance protein At4g19060 (383 aa).

The tract at residues 36–84 is disordered; sequence YEKWSSGKQRGSSSKHGNQSTHGDSSPTRNSSGSSKKGRPKANRVETSS. Residues 41–70 are compositionally biased toward polar residues; the sequence is SGKQRGSSSKHGNQSTHGDSSPTRNSSGSS. 2 NB-ARC domains span residues 75–184 and 207–281; these read PKAN…MFKH and VKEK…LAKA. Position 121-128 (121-128) interacts with ATP; sequence GKYGVGKT.

Possible disease resistance protein. This Arabidopsis thaliana (Mouse-ear cress) protein is Probable disease resistance protein At4g19060.